The following is a 535-amino-acid chain: Pre-mRNA-splicing factor SLU7-A (535 aa).

The interval 21 to 44 (EEARKAGLAPAEVDEDGKEINPHI) is disordered. A CCHC-type zinc finger spans residues 96-109 (CQNCGAMTHTAKAC). Residues 176–190 (LKKLEEKNNNEKGDD) show a composition bias toward basic and acidic residues. Disordered stretches follow at residues 176–204 (LKKLEEKNNNEKGDDANSDGEEDEDDLRV) and 489–508 (EDLSRREEKDERKRKYNVKY). Acidic residues predominate over residues 191–203 (ANSDGEEDEDDLR). S193 carries the phosphoserine modification. The Nuclear localization signal signature appears at 486-493 (LKKEDLSR). Residues 489–501 (EDLSRREEKDERK) are compositionally biased toward basic and acidic residues.

Belongs to the SLU7 family. In terms of tissue distribution, mainly expressed in tissues undergoing cell proliferation, particularly in lateral organs.

The protein resides in the nucleus. Participates in the second catalytic step of pre-mRNA splicing, when the free hydroxyl group of exon I attacks the 3'-splice site to generate spliced mRNA and the excised lariat intron. Together with SMP2, involved in the timing of cell cycle arrest during leaf development, in a STRUWWELPETER (SWP) dependent manner; promotes cell proliferation in developing organs. In Arabidopsis thaliana (Mouse-ear cress), this protein is Pre-mRNA-splicing factor SLU7-A.